The sequence spans 275 residues: Lectin (275 aa).

The signal sequence occupies residues 1-30 (MASLQTQMISFYLIFLSILLTTIFFFKVNS). Positions 111 and 129 each coordinate D-glucose. 2 residues coordinate Mn(2+): Glu-149 and Asp-151. Ca(2+) contacts are provided by Asp-151, Phe-153, Asn-155, and Asp-159. The Mn(2+) site is built by Asp-159 and His-166. The propeptide occupies 211–217 (NSLEEEN). D-glucose contacts are provided by Gly-246 and Ala-247. Residues 270-275 (KQAADA) constitute a propeptide that is removed on maturation.

The protein belongs to the leguminous lectin family. As to quaternary structure, heterotetramer of two alpha and two beta chains. In terms of processing, the mature form consists of two chains, alpha and beta, produced by cleavage of the immature protein. These remain cleaved, yet fold together to form one subunit.

D-mannose specific lectin. The sequence is that of Lectin from Lens culinaris subsp. tomentosus (Lentil).